Here is a 123-residue protein sequence, read N- to C-terminus: Small ribosomal subunit protein uS12 (123 aa).

Positions 1-30 are disordered; that stretch reads MPTIQQLVRKGRQDKVEKNKTPALEGSPQR. Residues 11 to 20 are compositionally biased toward basic and acidic residues; sequence GRQDKVEKNK. At D89 the chain carries 3-methylthioaspartic acid.

This sequence belongs to the universal ribosomal protein uS12 family. As to quaternary structure, part of the 30S ribosomal subunit. Contacts proteins S8 and S17. May interact with IF1 in the 30S initiation complex.

Functionally, with S4 and S5 plays an important role in translational accuracy. In terms of biological role, interacts with and stabilizes bases of the 16S rRNA that are involved in tRNA selection in the A site and with the mRNA backbone. Located at the interface of the 30S and 50S subunits, it traverses the body of the 30S subunit contacting proteins on the other side and probably holding the rRNA structure together. The combined cluster of proteins S8, S12 and S17 appears to hold together the shoulder and platform of the 30S subunit. This is Small ribosomal subunit protein uS12 (rpsL) from Streptomyces avermitilis (strain ATCC 31267 / DSM 46492 / JCM 5070 / NBRC 14893 / NCIMB 12804 / NRRL 8165 / MA-4680).